Here is a 395-residue protein sequence, read N- to C-terminus: ATP phosphoribosyltransferase regulatory subunit (395 aa).

Belongs to the class-II aminoacyl-tRNA synthetase family. HisZ subfamily. Heteromultimer composed of HisG and HisZ subunits.

The protein localises to the cytoplasm. Its pathway is amino-acid biosynthesis; L-histidine biosynthesis; L-histidine from 5-phospho-alpha-D-ribose 1-diphosphate: step 1/9. Required for the first step of histidine biosynthesis. May allow the feedback regulation of ATP phosphoribosyltransferase activity by histidine. The protein is ATP phosphoribosyltransferase regulatory subunit of Azotobacter vinelandii (strain DJ / ATCC BAA-1303).